Reading from the N-terminus, the 285-residue chain is HTH-type transcriptional regulator MurR (285 aa).

Residues 1–77 enclose the HTH rpiR-type domain; sequence MLYLTKISNA…MALIGEYSAS (77 aa). A DNA-binding region (H-T-H motif) is located at residues 37–56; it reads SRQMAKQLGISQSSIVKFAQ. The 141-residue stretch at 128-268 folds into the SIS domain; it reads IIEVISKAPF…FVGLVQLNDV (141 aa).

Homotetramer.

It functions in the pathway amino-sugar metabolism; N-acetylmuramate degradation [regulation]. Its function is as follows. Represses the expression of the murPQ operon involved in the uptake and degradation of N-acetylmuramic acid (MurNAc). Binds to two adjacent inverted repeats within the operator region. MurNAc 6-phosphate, the substrate of MurQ, is the specific inducer that weakens binding of MurR to the operator. The protein is HTH-type transcriptional regulator MurR of Escherichia coli (strain K12 / MC4100 / BW2952).